The following is a 239-amino-acid chain: Ribose-5-phosphate isomerase A (239 aa).

Residues 40–43 (SGST), 96–99 (DGAD), and 110–113 (KGGG) contribute to the substrate site. The active-site Proton acceptor is the E119. K137 is a binding site for substrate.

This sequence belongs to the ribose 5-phosphate isomerase family. In terms of assembly, homodimer.

The enzyme catalyses aldehydo-D-ribose 5-phosphate = D-ribulose 5-phosphate. Its pathway is carbohydrate degradation; pentose phosphate pathway; D-ribose 5-phosphate from D-ribulose 5-phosphate (non-oxidative stage): step 1/1. In terms of biological role, catalyzes the reversible conversion of ribose-5-phosphate to ribulose 5-phosphate. This Methanococcus vannielii (strain ATCC 35089 / DSM 1224 / JCM 13029 / OCM 148 / SB) protein is Ribose-5-phosphate isomerase A.